The primary structure comprises 102 residues: Large ribosomal subunit protein bL21 (102 aa).

It belongs to the bacterial ribosomal protein bL21 family. Part of the 50S ribosomal subunit. Contacts protein L20.

This protein binds to 23S rRNA in the presence of protein L20. This chain is Large ribosomal subunit protein bL21, found in Bacillus cytotoxicus (strain DSM 22905 / CIP 110041 / 391-98 / NVH 391-98).